Here is a 520-residue protein sequence, read N- to C-terminus: CUGBP Elav-like family member 4 (520 aa).

3 consecutive RRM domains span residues 47-128 (IKLF…PADS), 135-215 (RKLF…FADT), and 435-513 (CNLF…LKRP).

This sequence belongs to the CELF/BRUNOL family.

Its subcellular location is the nucleus. The protein resides in the cytoplasm. In terms of biological role, RNA-binding protein that may be implicated in the regulation of pre-mRNA alternative splicing. The chain is CUGBP Elav-like family member 4 (celf4) from Danio rerio (Zebrafish).